The following is a 156-amino-acid chain: MALEKSLALLPLLVLVLLVLGWVQPSLGKESRAQKFQRQHMDSDGSPSSNPTYCNNMMRRRNMTQGRCKPVNTFVHEPLVDVQDVCFQEKVTCKNGQPNCYKSSSSMRITDCRLTNGSRYPNCAYRTSQKERHIIVACEGNPYVPVHFDASVEDST.

Residues 1-28 form the signal peptide; that stretch reads MALEKSLALLPLLVLVLLVLGWVQPSLG. The segment covering 33 to 43 has biased composition (basic and acidic residues); it reads AQKFQRQHMDS. Positions 33 to 52 are disordered; it reads AQKFQRQHMDSDGSPSSNPT. Positions 35 and 38 each coordinate substrate. The Proton acceptor role is filled by H40. 4 disulfides stabilise this stretch: C54–C112, C68–C123, C86–C138, and C93–C100. N62 carries N-linked (GlcNAc...) asparagine glycosylation. Residues 69 to 73, K94, and R113 each bind substrate; that span reads KPVNT. N-linked (GlcNAc...) asparagine glycosylation is present at N116. H147 (proton donor) is an active-site residue.

Belongs to the pancreatic ribonuclease family. As to quaternary structure, monomer. Interacts with and forms tight 1:1 complexes with RNH1. Dimerization of two such complexes may occur. Interaction with RNH1 inhibits this protein.

The protein resides in the secreted. The catalysed reaction is an [RNA] containing cytidine + H2O = an [RNA]-3'-cytidine-3'-phosphate + a 5'-hydroxy-ribonucleotide-3'-[RNA].. It catalyses the reaction an [RNA] containing uridine + H2O = an [RNA]-3'-uridine-3'-phosphate + a 5'-hydroxy-ribonucleotide-3'-[RNA].. In terms of biological role, endonuclease that catalyzes the cleavage of RNA on the 3' side of pyrimidine nucleotides. Acts on single-stranded and double-stranded RNA. The chain is Ribonuclease pancreatic (RNASE1) from Saguinus oedipus (Cotton-top tamarin).